A 234-amino-acid polypeptide reads, in one-letter code: Ribosomal RNA small subunit methyltransferase G (234 aa).

S-adenosyl-L-methionine-binding positions include Gly96, Leu101, 119–121 (DAT), 147–148 (VE), and Arg161.

Belongs to the methyltransferase superfamily. RNA methyltransferase RsmG family.

The protein localises to the cytoplasm. In terms of biological role, specifically methylates the N7 position of a guanine in 16S rRNA. The chain is Ribosomal RNA small subunit methyltransferase G from Chlorobium chlorochromatii (strain CaD3).